A 467-amino-acid polypeptide reads, in one-letter code: 3-isopropylmalate dehydratase large subunit (467 aa).

Residues Cys348, Cys409, and Cys412 each contribute to the [4Fe-4S] cluster site. The segment at 423 to 448 (NERSISTSNRNFEGRQGKGSRTHLAS) is disordered.

It belongs to the aconitase/IPM isomerase family. LeuC type 1 subfamily. Heterodimer of LeuC and LeuD. [4Fe-4S] cluster serves as cofactor.

It carries out the reaction (2R,3S)-3-isopropylmalate = (2S)-2-isopropylmalate. The protein operates within amino-acid biosynthesis; L-leucine biosynthesis; L-leucine from 3-methyl-2-oxobutanoate: step 2/4. In terms of biological role, catalyzes the isomerization between 2-isopropylmalate and 3-isopropylmalate, via the formation of 2-isopropylmaleate. The sequence is that of 3-isopropylmalate dehydratase large subunit from Bifidobacterium longum (strain DJO10A).